A 399-amino-acid polypeptide reads, in one-letter code: Lipase member K (399 aa).

The signal sequence occupies residues 1–19; that stretch reads MWQLLAAACWMLLLGSMYG. In terms of domain architecture, AB hydrolase-1 spans 78–378; that stretch reads PAVYLQHGLI…HYNHVDFYLG (301 aa). Ser172 functions as the Nucleophile in the catalytic mechanism. An intrachain disulfide couples Cys246 to Cys255. Residues Asn271 and Asn327 are each glycosylated (N-linked (GlcNAc...) asparagine). Residues Asp343 and His372 each act as charge relay system in the active site.

The protein belongs to the AB hydrolase superfamily. Lipase family. Exclusively expressed in the epidermis within the granular keratinocytes.

It localises to the secreted. In terms of biological role, plays a highly specific role in the last step of keratinocyte differentiation. May have an essential function in lipid metabolism of the most differentiated epidermal layers. The protein is Lipase member K (LIPK) of Homo sapiens (Human).